The primary structure comprises 631 residues: Leucine aminopeptidase 2-2 (631 aa).

Substrate contacts are provided by residues 140–142 (QCQ) and 265–270 (PYGGME). Zn(2+) is bound at residue His294. Glu295 (proton acceptor) is an active-site residue. Zn(2+) contacts are provided by His298 and Glu317. Catalysis depends on Tyr395, which acts as the Proton donor.

This sequence belongs to the peptidase M1 family. Zn(2+) is required as a cofactor.

The protein localises to the cytoplasm. It is found in the nucleus. It carries out the reaction an epoxide + H2O = an ethanediol. In terms of biological role, aminopeptidase that preferentially cleaves di- and tripeptides. Also has low epoxide hydrolase activity (in vitro). Can hydrolyze the epoxide leukotriene LTA(4) but it forms preferentially 5,6-dihydroxy-7,9,11,14-eicosatetraenoic acid rather than the cytokine leukotriene B(4) as the product compared to the homologous mammalian enzyme (in vitro). The polypeptide is Leucine aminopeptidase 2-2 (Meyerozyma guilliermondii (strain ATCC 6260 / CBS 566 / DSM 6381 / JCM 1539 / NBRC 10279 / NRRL Y-324) (Yeast)).